Reading from the N-terminus, the 121-residue chain is Large ribosomal subunit protein bL19 (121 aa).

It belongs to the bacterial ribosomal protein bL19 family.

Functionally, this protein is located at the 30S-50S ribosomal subunit interface and may play a role in the structure and function of the aminoacyl-tRNA binding site. In Neisseria gonorrhoeae (strain ATCC 700825 / FA 1090), this protein is Large ribosomal subunit protein bL19.